The primary structure comprises 334 residues: Spermatogenesis-associated protein 32 (334 aa).

The interval 24–98 (SDHHRHHHHH…TESPEQQNYR (75 aa)) is disordered. Residues 37–47 (ENEDEDTEVEA) are compositionally biased toward acidic residues. A compositionally biased stretch (basic and acidic residues) spans 48–60 (ELPRTEPPPKVDP). Polar residues predominate over residues 77–98 (SKTTPETEGDSYTESPEQQNYR). A phosphoserine mark is found at Ser-135 and Ser-138.

Interacts with syntaxin-1 and ACTB. As to expression, highly expressed in the testis and weakly in the brain and heart.

The protein is Spermatogenesis-associated protein 32 (Spata32) of Mus musculus (Mouse).